Here is a 186-residue protein sequence, read N- to C-terminus: uncharacterized protein (186 aa).

The 173-residue stretch at 12 to 184 (LLKSPVEEDD…HIYKLSKQIR (173 aa)) folds into the N-acetyltransferase domain.

Belongs to the acetyltransferase family.

It is found in the cytoplasm. It localises to the nucleus. This is an uncharacterized protein from Schizosaccharomyces pombe (strain 972 / ATCC 24843) (Fission yeast).